Here is an 85-residue protein sequence, read N- to C-terminus: Sec-independent protein translocase protein TatA (85 aa).

Residues 1 to 21 form a helical membrane-spanning segment; sequence MAGLQGWQLVIIILLAILLFA. Positions 43 to 85 are disordered; it reads VKQMRTEGKDAKDERSGTGSTAADEPVEGRVVDRDETDPRDQR. Basic and acidic residues-rich tracts occupy residues 44–58 and 69–85; these read KQMR…DERS and VEGR…RDQR.

The protein belongs to the TatA/E family. As to quaternary structure, the Tat system comprises two distinct complexes: a TatABC complex, containing multiple copies of TatA, TatB and TatC subunits, and a separate TatA complex, containing only TatA subunits. Substrates initially bind to the TatABC complex, which probably triggers association of the separate TatA complex to form the active translocon.

Its subcellular location is the cell membrane. Functionally, part of the twin-arginine translocation (Tat) system that transports large folded proteins containing a characteristic twin-arginine motif in their signal peptide across membranes. TatA could form the protein-conducting channel of the Tat system. In Micrococcus luteus (strain ATCC 4698 / DSM 20030 / JCM 1464 / CCM 169 / CCUG 5858 / IAM 1056 / NBRC 3333 / NCIMB 9278 / NCTC 2665 / VKM Ac-2230) (Micrococcus lysodeikticus), this protein is Sec-independent protein translocase protein TatA.